We begin with the raw amino-acid sequence, 513 residues long: Probable hydrolase YhcX (513 aa).

Residues 14-212 enclose the N-acetyltransferase domain; it reads MVIRNIEEKD…YATLMEWNNV (199 aa). The 256-residue stretch at 229 to 484 folds into the CN hydrolase domain; that stretch reads VRICVIQYEM…EMVVIGDVDL (256 aa). Residue Glu-270 is the Proton acceptor of the active site. The Proton donor role is filled by Lys-345. The active-site Nucleophile is Cys-379.

Belongs to the carbon-nitrogen hydrolase superfamily. NIT1/NIT2 family.

The sequence is that of Probable hydrolase YhcX (yhcX) from Bacillus subtilis (strain 168).